The primary structure comprises 308 residues: D-alanine--D-alanine ligase (308 aa).

Residues 102-302 enclose the ATP-grasp domain; it reads KKVAAAAGIP…FGDLVSWMVE (201 aa). Residue 128–183 participates in ATP binding; that stretch reads PLQPPYVVKPVREGSSFGVVIVKEDQSHPPQILTSSEWPFGNQVMVERYIHGRELT. The Mg(2+) site is built by Asp252, Glu269, and Asn271.

The protein belongs to the D-alanine--D-alanine ligase family. Mg(2+) serves as cofactor. The cofactor is Mn(2+).

The protein localises to the cytoplasm. The enzyme catalyses 2 D-alanine + ATP = D-alanyl-D-alanine + ADP + phosphate + H(+). Its pathway is cell wall biogenesis; peptidoglycan biosynthesis. Its function is as follows. Cell wall formation. The polypeptide is D-alanine--D-alanine ligase (Agrobacterium fabrum (strain C58 / ATCC 33970) (Agrobacterium tumefaciens (strain C58))).